A 280-amino-acid polypeptide reads, in one-letter code: MRIALAQIRSGTDPAANLQLVGKYAGEAATAGAQLVVFPEATMCRLGVPLRQVAEPVDGPWANGVRRIATEAGITVIAGMFTPTGDGRVTNTLIAAGPGTPNQPDAHYHKIHLYDAFGFTESRTVAPGREPVVVVVDGVRVGLTVCYDIRFPALYTELARRGAQLIAVCASWGSGPGKLEQWTLLARARALDSMSYVAAAGQADPGDARTGVGASSAAPTGVGGSLVASPLGEVVVSAGTQPQLLVADIDVDNVAAARDRIAVLRNQTDFVQIDKAQSRG.

In terms of domain architecture, CN hydrolase spans 1–251; sequence MRIALAQIRS…PQLLVADIDV (251 aa). Glutamate 40 (proton acceptor) is an active-site residue. Lysine 110 (proton donor) is an active-site residue. Catalysis depends on cysteine 146, which acts as the Nucleophile.

It belongs to the carbon-nitrogen hydrolase superfamily. NIT1/NIT2 family.

The protein is Hydrolase MT0498 of Mycobacterium tuberculosis (strain CDC 1551 / Oshkosh).